A 334-amino-acid polypeptide reads, in one-letter code: MNNSNLAAARNLIQVVTGEWKSRCVYVATRLGLADLIESGIDSDETLAAAVGSDAERIHRLMRLLVAFEIFQGDTRDGYANTPTSHLLRDVEGSFRDMVLFYGEEFHAAWTPACEALLSGTPGFELAFGEDFYSYLKRCPDAGRRFLLAMKASNLAFHEIPRLLDFRGRSFVDVGGGSGELTKAILQAEPSARGVMLDREGSLGVARDNLSSLLAGERVSLVGGDMLQEVPSNGDIYLLSRIIGDLDEAASLRLLGNCREAMAGDGRVVVIERTISASEPSPMSVLWDVHLFMACAGRHRTTEEVVDLLGRGGFAVERIVDLPMETRMIVAARA.

Residues aspartate 198 and arginine 241 each coordinate S-adenosyl-L-methionine.

It belongs to the class I-like SAM-binding methyltransferase superfamily. Cation-independent O-methyltransferase family. Homodimer in solution. Probably interacts transiently with PhzS.

It carries out the reaction phenazine-1-carboxylate + S-adenosyl-L-methionine = 5-methyl-phenazine-1-carboxylate + S-adenosyl-L-homocysteine. The protein operates within secondary metabolite biosynthesis; pyocyanine biosynthesis. Its activity is regulated as follows. In vitro, requires PhzS for activity. Functionally, involved in the biosynthesis of pyocyanine, a blue-pigmented phenazine derivative, which plays a role in virulence. Converts phenazine-1-carboxylate (PCA) to 5-methylphenazine-1-carboxylate (5-methyl-PCA). The protein is Phenazine-1-carboxylate N-methyltransferase of Pseudomonas aeruginosa (strain ATCC 15692 / DSM 22644 / CIP 104116 / JCM 14847 / LMG 12228 / 1C / PRS 101 / PAO1).